The chain runs to 481 residues: MNWSDLNLMPALPEVALLSLLVLLLPADLWASDDKCRWTHYGALATVAVTAAVQLAVWEQGSTSSFNGMYIADGMSRLAKMVLYALTFVLFVYAKPYNQVRGIFKGEFYTLSLFALLGMSVMVSAGHFLTAYIGLELLSLALYALIALRRDSGFAAEAALKYFVLGALASGLLLYGISMVYGATGSLEFAGVLASSFNEEANEWLLKLGLVFIVVAVAFKLGAVPFHMWMPDVYHGAPTSVTALVGTAPKIAAVVFAFRILVTGLGTVHHDWSLMFALLAAASLLVGNLAAIMQTNIKRMLAYSTVSHMGFILLAFMAGAVGFAAGLYYAITYALMAAAGFGVLMVLSDGDNECENISDLAGLNQHRVWLAFLMLLVMFSMAGIPPLMGFYAKFGVIMALLKQGYVWLSVFAVVMSLVGAFYYLRVVKVMYFDESGRARPAAGGNNAAKSLLSVNALLLVLWGIMPQTVIDWCAKALENTL.

The next 14 membrane-spanning stretches (helical) occupy residues 11–31 (ALPEVALLSLLVLLLPADLWA), 38–58 (WTHYGALATVAVTAAVQLAVW), 74–94 (GMSRLAKMVLYALTFVLFVYA), 103–123 (IFKGEFYTLSLFALLGMSVMV), 128–148 (FLTAYIGLELLSLALYALIAL), 163–183 (FVLGALASGLLLYGISMVYGA), 208–228 (LGLVFIVVAVAFKLGAVPFHM), 241–261 (VTALVGTAPKIAAVVFAFRIL), 272–292 (WSLMFALLAAASLLVGNLAAI), 300–322 (MLAYSTVSHMGFILLAFMAGAVG), 332–352 (TYALMAAAGFGVLMVLSDGDN), 368–388 (VWLAFLMLLVMFSMAGIPPLM), 404–424 (GYVWLSVFAVVMSLVGAFYYL), and 450–470 (SLLSVNALLLVLWGIMPQTVI).

Belongs to the complex I subunit 2 family. NDH-1 is composed of 14 different subunits. Subunits NuoA, H, J, K, L, M, N constitute the membrane sector of the complex.

Its subcellular location is the cell inner membrane. It carries out the reaction a quinone + NADH + 5 H(+)(in) = a quinol + NAD(+) + 4 H(+)(out). Functionally, NDH-1 shuttles electrons from NADH, via FMN and iron-sulfur (Fe-S) centers, to quinones in the respiratory chain. The immediate electron acceptor for the enzyme in this species is believed to be ubiquinone. Couples the redox reaction to proton translocation (for every two electrons transferred, four hydrogen ions are translocated across the cytoplasmic membrane), and thus conserves the redox energy in a proton gradient. The chain is NADH-quinone oxidoreductase subunit N from Neisseria gonorrhoeae (strain ATCC 700825 / FA 1090).